The primary structure comprises 252 residues: Carboxymethylenebutenolidase (252 aa).

Residues 1–28 (MCHNKSSAPPTPAHISIQQNRTPGTDPV) are disordered. Catalysis depends on residues C126, D183, and H214.

The protein belongs to the dienelactone hydrolase family.

It catalyses the reaction 2-(5-oxo-2,5-dihydrofuran-2-ylidene)acetate + H2O = 4-oxohex-2-enedioate + H(+). The protein operates within aromatic compound metabolism; 3-chlorocatechol degradation. In terms of biological role, ring cleavage of cyclic ester dienelactone to produce maleylacetate. This Rhodococcus opacus (Nocardia opaca) protein is Carboxymethylenebutenolidase (clcD).